Consider the following 301-residue polypeptide: Glutamine amidotransferase-like protein GlxB (301 aa).

C2 is an active-site residue. A Glutamine amidotransferase type-2 domain is found at 2-298 (CGIVGLFLKD…PATVYFWDHQ (297 aa)).

The chain is Glutamine amidotransferase-like protein GlxB (glxB) from Rhizobium meliloti (strain 1021) (Ensifer meliloti).